Reading from the N-terminus, the 103-residue chain is Small ribosomal subunit protein bS18c (103 aa).

This sequence belongs to the bacterial ribosomal protein bS18 family. As to quaternary structure, part of the 30S ribosomal subunit.

It localises to the plastid. Its subcellular location is the chloroplast. The protein is Small ribosomal subunit protein bS18c of Buxus microphylla (Littleleaf boxwood).